A 424-amino-acid chain; its full sequence is S-adenosylmethionine synthase (424 aa).

An ATP-binding site is contributed by His-14. Asp-16 contributes to the Mg(2+) binding site. Glu-42 contributes to the K(+) binding site. L-methionine-binding residues include Glu-55 and Gln-98. Positions 98–108 are flexible loop; that stretch reads QSNDISRGIER. Residues 165 to 167, 242 to 243, Asp-251, 257 to 258, Ala-274, and Lys-278 each bind ATP; these read DAK, KF, and RK. Asp-251 lines the L-methionine pocket. Lys-282 contributes to the L-methionine binding site.

The protein belongs to the AdoMet synthase family. In terms of assembly, homotetramer; dimer of dimers. Requires Mg(2+) as cofactor. The cofactor is K(+).

It localises to the cytoplasm. It carries out the reaction L-methionine + ATP + H2O = S-adenosyl-L-methionine + phosphate + diphosphate. It participates in amino-acid biosynthesis; S-adenosyl-L-methionine biosynthesis; S-adenosyl-L-methionine from L-methionine: step 1/1. Its function is as follows. Catalyzes the formation of S-adenosylmethionine (AdoMet) from methionine and ATP. The overall synthetic reaction is composed of two sequential steps, AdoMet formation and the subsequent tripolyphosphate hydrolysis which occurs prior to release of AdoMet from the enzyme. This is S-adenosylmethionine synthase from Azobacteroides pseudotrichonymphae genomovar. CFP2.